The primary structure comprises 162 residues: Ubiquitin D (162 aa).

2 Ubiquitin-like domains span residues 3–78 (SVRT…LKVV) and 87–160 (LFLV…THCT).

Belongs to the ubiquitin D family. As to quaternary structure, interacts directly with the 26S proteasome. Interacts with NUB1; this interaction facilitates the linking of UBD-conjugated target protein to the proteasome complex and accelerates its own degradation and that of its conjugates. Interacts (via ubiquitin-like 1 domain) with the spindle checkpoint protein MAD2L1 during mitosis. Present in aggresomes of proteasome inhibited cells. Interacts with HDAC6 under proteasome impairment conditions. Forms a thioester with UBA6 in cells stimulated with tumor necrosis factor-alpha (TNFa) and interferon-gamma (IFNg). Interacts with SQSTM1 and TP53/p53. In terms of processing, can be acetylated. In terms of tissue distribution, mostly expressed in thymus and intestine.

Its subcellular location is the nucleus. The protein localises to the cytoplasm. In terms of biological role, ubiquitin-like protein modifier which can be covalently attached to target proteins and subsequently leads to their degradation by the 26S proteasome, in a NUB1-dependent manner. Conjugation to the target protein is activated by UBA6 via adenylation of its C-terminal glycine. Probably functions as a survival factor. Promotes the expression of the proteasome subunit beta type-9 (PSMB9/LMP2). Regulates TNF-alpha-induced and LPS-mediated activation of the central mediator of innate immunity NF-kappa-B by promoting TNF-alpha-mediated proteasomal degradation of ubiquitinated-I-kappa-B-alpha. Required for TNF-alpha-induced p65 nuclear translocation in renal tubular epithelial cells (RTECs). May be involved in dendritic cell (DC) maturation, the process by which immature dendritic cells differentiate into fully competent antigen-presenting cells that initiate T-cell responses. Mediates mitotic non-disjunction and chromosome instability, in long-term in vitro culture and cancers, by abbreviating mitotic phase and impairing the kinetochore localization of MAD2L1 during the prometaphase stage of the cell cycle. May be involved in the formation of aggresomes when proteasome is saturated or impaired. Mediates apoptosis in a caspase-dependent manner, especially in renal epithelium and tubular cells during renal diseases. The chain is Ubiquitin D (Ubd) from Mus musculus (Mouse).